Reading from the N-terminus, the 172-residue chain is 3-hydroxydecanoyl-[acyl-carrier-protein] dehydratase (172 aa).

H71 is a catalytic residue.

Belongs to the thioester dehydratase family. FabA subfamily. In terms of assembly, homodimer.

The protein resides in the cytoplasm. It catalyses the reaction a (3R)-hydroxyacyl-[ACP] = a (2E)-enoyl-[ACP] + H2O. The enzyme catalyses (3R)-hydroxydecanoyl-[ACP] = (2E)-decenoyl-[ACP] + H2O. The catalysed reaction is (2E)-decenoyl-[ACP] = (3Z)-decenoyl-[ACP]. Its pathway is lipid metabolism; fatty acid biosynthesis. Its function is as follows. Necessary for the introduction of cis unsaturation into fatty acids. Catalyzes the dehydration of (3R)-3-hydroxydecanoyl-ACP to E-(2)-decenoyl-ACP and then its isomerization to Z-(3)-decenoyl-ACP. Can catalyze the dehydratase reaction for beta-hydroxyacyl-ACPs with saturated chain lengths up to 16:0, being most active on intermediate chain length. The protein is 3-hydroxydecanoyl-[acyl-carrier-protein] dehydratase of Escherichia fergusonii (strain ATCC 35469 / DSM 13698 / CCUG 18766 / IAM 14443 / JCM 21226 / LMG 7866 / NBRC 102419 / NCTC 12128 / CDC 0568-73).